Reading from the N-terminus, the 309-residue chain is Olfactory receptor 1A1 (309 aa).

At 1-25 (MRENNQSSTLEFILLGVTGQQEQED) the chain is on the extracellular side. An N-linked (GlcNAc...) asparagine glycan is attached at N5. Residues 26-49 (FFYILFLFIYPITLIGNLLIVLAI) form a helical membrane-spanning segment. Topologically, residues 50–57 (CSDVHLHN) are cytoplasmic. Residues 58–79 (PMYFLLANLSLVDIFFSSVTIP) form a helical membrane-spanning segment. Over 80 to 100 (KMLANHLLGSKSISFGGCLTQ) the chain is Extracellular. An intrachain disulfide couples C97 to C189. Residues 101 to 120 (MYFMIALGNTDSYILAAMAY) form a helical membrane-spanning segment. Residues 121-139 (DRAVAISRPLHYTTIMSPR) are Cytoplasmic-facing. The helical transmembrane segment at 140–158 (SCIWLIAGSWVIGNANALP) threads the bilayer. Residues 159-195 (HTLLTASLSFCGNQEVANFYCDITPLLKLSCSDIHFH) lie on the Extracellular side of the membrane. The chain crosses the membrane as a helical span at residues 196 to 218 (VKMMYLGVGIFSVPLLCIIVSYI). Residues 219-235 (RVFSTVFQVPSTKGVLK) are Cytoplasmic-facing. A helical transmembrane segment spans residues 236–258 (AFSTCGSHLTVVSLYYGTVMGMY). Topologically, residues 259-270 (FRPLTNYSLKDA) are extracellular. The N-linked (GlcNAc...) asparagine glycan is linked to N264. A helical transmembrane segment spans residues 271–290 (VITVMYTAVTPMLNPFIYSL). The Cytoplasmic segment spans residues 291–309 (RNRDVKAALRKLFNKRISS).

The protein belongs to the G-protein coupled receptor 1 family.

It localises to the cell membrane. Odorant receptor. The protein is Olfactory receptor 1A1 (OR1A1) of Pan troglodytes (Chimpanzee).